Reading from the N-terminus, the 231-residue chain is Somatolactin (231 aa).

Positions 1–24 (MNMMTVKQQGVWAALLWPYLLTAS) are cleaved as a signal peptide. 3 disulfide bridges follow: C29-C39, C89-C205, and C222-C230. A glycan (N-linked (GlcNAc...) asparagine) is linked at N145.

This sequence belongs to the somatotropin/prolactin family. In terms of tissue distribution, pituitary gland.

It is found in the secreted. The protein is Somatolactin of Paralichthys olivaceus (Bastard halibut).